Reading from the N-terminus, the 435-residue chain is NADH-quinone oxidoreductase subunit D (435 aa).

The protein belongs to the complex I 49 kDa subunit family. In terms of assembly, NDH-1 is composed of 14 different subunits. Subunits NuoB, C, D, E, F, and G constitute the peripheral sector of the complex.

The protein resides in the cell membrane. It carries out the reaction a quinone + NADH + 5 H(+)(in) = a quinol + NAD(+) + 4 H(+)(out). Its function is as follows. NDH-1 shuttles electrons from NADH, via FMN and iron-sulfur (Fe-S) centers, to quinones in the respiratory chain. The immediate electron acceptor for the enzyme in this species is believed to be ubiquinone. Couples the redox reaction to proton translocation (for every two electrons transferred, four hydrogen ions are translocated across the cytoplasmic membrane), and thus conserves the redox energy in a proton gradient. In Stenotrophomonas maltophilia (strain K279a), this protein is NADH-quinone oxidoreductase subunit D.